The sequence spans 138 residues: MSNSIEQQQTPEVPPLKYGEREIAKGELFTFPNPRIGRHYQIHITLPEFTCKCPFSGYPDFATIYLTYVPNEKVVELKAIKLYINNYRDLYISHEEAVNQILDDFVAACDPLEVQIKGDYNPRGNVHTVIEVNYQKAN.

The Thioimide intermediate role is filled by C53. D60 serves as the catalytic Proton donor. Substrate contacts are provided by residues V75–L77 and H94–E95.

This sequence belongs to the GTP cyclohydrolase I family. QueF type 1 subfamily.

It is found in the cytoplasm. The enzyme catalyses 7-aminomethyl-7-carbaguanine + 2 NADP(+) = 7-cyano-7-deazaguanine + 2 NADPH + 3 H(+). It participates in tRNA modification; tRNA-queuosine biosynthesis. Its function is as follows. Catalyzes the NADPH-dependent reduction of 7-cyano-7-deazaguanine (preQ0) to 7-aminomethyl-7-deazaguanine (preQ1). This chain is NADPH-dependent 7-cyano-7-deazaguanine reductase, found in Gloeothece citriformis (strain PCC 7424) (Cyanothece sp. (strain PCC 7424)).